A 402-amino-acid polypeptide reads, in one-letter code: Nuclear hormone receptor family member nhr-96 (402 aa).

Residues 4-79 (FGLCAVCGQV…VGMDVKKIQQ (76 aa)) constitute a DNA-binding region (nuclear receptor). NR C4-type zinc fingers lie at residues 7-27 (CAVC…CRSC) and 44-67 (CVKA…LKRC). The NR LBD domain maps to 154–402 (NYYNSLELLT…FSDPEMFELT (249 aa)).

Belongs to the nuclear hormone receptor family.

The protein localises to the nucleus. Its function is as follows. Orphan nuclear receptor. This is Nuclear hormone receptor family member nhr-96 (nhr-96) from Caenorhabditis elegans.